The following is a 94-amino-acid chain: Small ribosomal subunit protein bS18c (94 aa).

This sequence belongs to the bacterial ribosomal protein bS18 family. In terms of assembly, part of the 30S ribosomal subunit.

The protein resides in the plastid. It localises to the chloroplast. The protein is Small ribosomal subunit protein bS18c of Manihot esculenta (Cassava).